The primary structure comprises 420 residues: O-methyltransferase opaF (420 aa).

Residues 262–263, aspartate 287, and 308–309 each bind S-adenosyl-L-methionine; these read GG and DL. Histidine 328 serves as the catalytic Proton acceptor.

Belongs to the class I-like SAM-binding methyltransferase superfamily. Cation-independent O-methyltransferase family.

It participates in secondary metabolite biosynthesis. Functionally, O-methyltransferase; part of the gene cluster that mediates the biosynthesis of oxepinamides, derivatives of anthranilyl-containing tripeptides that share an oxepin ring and a fused pyrimidinone moiety. The nonribosomal peptide synthetase (NRPS) opaA assembles the quinazolinone core with D-Phe incorporation. The first adenylation domain (A1) of opaA loads and activates anthranilic acid whereas the second A domain (A2) is for activating of L-Phe, which is then converted to D-form by the E domain. The third A domain (A3) is responsible for L-Ile activation and the terminal condensation domain C3 for cyclization and releasing the NRPS product protuboxepin K. The cytochrome P450 monooxygenase opaB then catalyzes alone the oxepin ring formation to convert protuboxepin K into protuboxepin A. The flavoenzyme opaC installs subsequently one hydroxyl group at the oxepin ring, accompanied by double bond migration, to form 15-epi-oxepinamide E. The epimerase opaE changes the D-Phe residue back to L-form, leading to oxepinamide E, which is further methylated at the hydroxyl group at C-12 by the O-methyltransferase OpaF to yield oxepinamide F. In Aspergillus ustus, this protein is O-methyltransferase opaF.